The chain runs to 99 residues: Small integral membrane protein 14 (99 aa).

Over 1–49 (MAEGGFDPCECICSHEHAMRRLINLLRQSQSYCTDTECLRELPGPSGDS) the chain is Lumenal. A helical membrane pass occupies residues 50–70 (GISITVILMAWMVIAVLLFLL). Topologically, residues 71–99 (RPPNLRGSSLPGKPSSPHSGQDPPAPPVD) are cytoplasmic. The interval 77 to 99 (GSSLPGKPSSPHSGQDPPAPPVD) is disordered.

The protein resides in the endoplasmic reticulum membrane. The chain is Small integral membrane protein 14 (Smim14) from Rattus norvegicus (Rat).